The chain runs to 338 residues: Probable tRNA pseudouridine synthase B (338 aa).

Asp-78 (nucleophile) is an active-site residue. The PUA domain maps to 245 to 320; sequence LPKIILRDSA…LAATSVRIMM (76 aa).

The protein belongs to the pseudouridine synthase TruB family. Type 2 subfamily.

It carries out the reaction uridine(55) in tRNA = pseudouridine(55) in tRNA. Its function is as follows. Could be responsible for synthesis of pseudouridine from uracil-55 in the psi GC loop of transfer RNAs. The polypeptide is Probable tRNA pseudouridine synthase B (Methanosarcina barkeri (strain Fusaro / DSM 804)).